Here is a 394-residue protein sequence, read N- to C-terminus: Penicillopepsin-2 (394 aa).

Positions 1–20 are cleaved as a signal peptide; it reads MVVFSKITVVLAGLATVASA. The propeptide at 21 to 71 is activation peptide; sequence VPTGTSRKSTFTVNQKARPVAQAKAINLPGMYASALSKYGAAVPASVKAAA. The region spanning 87 to 391 is the Peptidase A1 domain; sequence YLTPVNVGGT…DANGPRLGFA (305 aa). Asp103 is a catalytic residue. The N-linked (GlcNAc...) asparagine glycan is linked to Asn132. Residue Asp283 is part of the active site. An intrachain disulfide couples Cys319 to Cys354.

This sequence belongs to the peptidase A1 family. As to quaternary structure, monomer.

The protein resides in the secreted. It carries out the reaction Hydrolysis of proteins with broad specificity similar to that of pepsin A, preferring hydrophobic residues at P1 and P1', but also cleaving 20-Gly-|-Glu-21 in the B chain of insulin. Clots milk, and activates trypsinogen.. Functionally, secreted aspartic endopeptidase that allows assimilation of proteinaceous substrates. The scissile peptide bond is attacked by a nucleophilic water molecule activated by two aspartic residues in the active site. Shows a broad primary substrate specificity. Favors hydrophobic residues at the P1 and P1' positions, but can also activate trypsinogen and hydrolyze the B chain of insulin between positions 'Gly-20' and 'Glu-21'. The polypeptide is Penicillopepsin-2 (Penicillium janthinellum (Penicillium vitale)).